The sequence spans 511 residues: GMP synthase [glutamine-hydrolyzing] (511 aa).

The Glutamine amidotransferase type-1 domain maps to 3–193 (KILILDFGGQ…VYSICDVAGD (191 aa)). Cys-80 acts as the Nucleophile in catalysis. Residues His-167 and Glu-169 contribute to the active site. The region spanning 194–384 (WEPKNIKLEK…LDIPYQNVYR (191 aa)) is the GMPS ATP-PPase domain. Residue 221 to 227 (SGGVDSL) participates in ATP binding.

Homodimer.

It carries out the reaction XMP + L-glutamine + ATP + H2O = GMP + L-glutamate + AMP + diphosphate + 2 H(+). It functions in the pathway purine metabolism; GMP biosynthesis; GMP from XMP (L-Gln route): step 1/1. In terms of biological role, catalyzes the synthesis of GMP from XMP. The sequence is that of GMP synthase [glutamine-hydrolyzing] from Malacoplasma penetrans (strain HF-2) (Mycoplasma penetrans).